We begin with the raw amino-acid sequence, 248 residues long: Aliphatic sulfonates import ATP-binding protein SsuB 2 (248 aa).

The region spanning 14-230 (VRVESLVRSF…DHGHRRFGEI (217 aa)) is the ABC transporter domain. 46–53 (GRSGSGKS) contacts ATP.

Belongs to the ABC transporter superfamily. Aliphatic sulfonates importer (TC 3.A.1.17.2) family. In terms of assembly, the complex is composed of two ATP-binding proteins (SsuB), two transmembrane proteins (SsuC) and a solute-binding protein (SsuA).

Its subcellular location is the cell inner membrane. It carries out the reaction ATP + H2O + aliphatic sulfonate-[sulfonate-binding protein]Side 1 = ADP + phosphate + aliphatic sulfonateSide 2 + [sulfonate-binding protein]Side 1.. In terms of biological role, part of the ABC transporter complex SsuABC involved in aliphatic sulfonates import. Responsible for energy coupling to the transport system. The sequence is that of Aliphatic sulfonates import ATP-binding protein SsuB 2 from Mesorhizobium japonicum (strain LMG 29417 / CECT 9101 / MAFF 303099) (Mesorhizobium loti (strain MAFF 303099)).